A 721-amino-acid chain; its full sequence is Protein mu-NS (721 aa).

Residues 1-13 (MASFKGFSANTVP) form an interaction with sigma-NS region. Positions 1–38 (MASFKGFSANTVPVSKAKRDISSLAATPGLRSQSFTPS) are RNA-binding. The interval 14–40 (VSKAKRDISSLAATPGLRSQSFTPSVD) is interaction with mu-2. The interval 471-721 (SNDVTDGIKL…IDFSVPTDEL (251 aa)) is involved in the formation of factory-like inclusions. Coiled coils occupy residues 522–559 (PLLSQLRELSSEVTRLQMELSRAQSLNAQLEADVKSAQ) and 628–684 (LMNG…ALNQ).

Belongs to the orthoreovirus mu-NS protein family. As to quaternary structure, interacts with mu-2. Interacts with sigma-NS; in viral factories. Interacts with the inner capsid proteins lambda-1 and sigma-2, and outer capsid protein lambda-2; in viral factories. The N-terminus is blocked.

It localises to the host cytoplasm. Its function is as follows. Non-structural protein implicated with protein sigma-NS in forming the matrix of viral factories, which are large inclusions in the host cytoplasm where replication intermediates are assembled and viral RNA replication takes place. Together with mu-2, recruits the other core proteins to these factories. Binds RNA and recruits viral mRNAs to sites of viral replication. The sequence is that of Protein mu-NS (M3) from Reovirus type 3 (strain Dearing) (T3D).